The primary structure comprises 151 residues: Large ribosomal subunit protein bL9 (151 aa).

Belongs to the bacterial ribosomal protein bL9 family.

Functionally, binds to the 23S rRNA. In Chlorobium phaeovibrioides (strain DSM 265 / 1930) (Prosthecochloris vibrioformis (strain DSM 265)), this protein is Large ribosomal subunit protein bL9.